Consider the following 428-residue polypeptide: D-amino acid dehydrogenase (428 aa).

Val3–Tyr17 is an FAD binding site.

Belongs to the DadA oxidoreductase family. Requires FAD as cofactor.

The catalysed reaction is a D-alpha-amino acid + A + H2O = a 2-oxocarboxylate + AH2 + NH4(+). It functions in the pathway amino-acid degradation; D-alanine degradation; NH(3) and pyruvate from D-alanine: step 1/1. Oxidative deamination of D-amino acids. This chain is D-amino acid dehydrogenase, found in Burkholderia pseudomallei (strain K96243).